A 452-amino-acid polypeptide reads, in one-letter code: Maltoporin (452 aa).

The signal sequence occupies residues 1-25 (MMITLRKLPLAVAVAAGVMSAQAMA).

This sequence belongs to the porin LamB (TC 1.B.3) family. Homotrimer formed of three 18-stranded antiparallel beta-barrels, containing three independent channels.

Its subcellular location is the cell outer membrane. It catalyses the reaction beta-maltose(in) = beta-maltose(out). Its function is as follows. Involved in the transport of maltose and maltodextrins. The sequence is that of Maltoporin from Salmonella newport (strain SL254).